Consider the following 270-residue polypeptide: Large ribosomal subunit protein uL2c (270 aa).

The disordered stretch occupies residues 221 to 245 (NPIDHPHGGGEGRAPIGRNQPKTPW).

Belongs to the universal ribosomal protein uL2 family. As to quaternary structure, part of the 50S ribosomal subunit.

Its subcellular location is the plastid. The polypeptide is Large ribosomal subunit protein uL2c (rpl2) (Cuscuta gronovii (Common dodder)).